Here is a 228-residue protein sequence, read N- to C-terminus: Ribonuclease 3 (228 aa).

The RNase III domain maps to 5 to 127 (LTALQERLKH…LIGAVYLDAG (123 aa)). Residue E40 coordinates Mg(2+). D44 is a catalytic residue. Mg(2+) contacts are provided by D113 and E116. The active site involves E116. Positions 154–224 (DPKTELQEWL…AAAMLIRLKA (71 aa)) constitute a DRBM domain.

The protein belongs to the ribonuclease III family. As to quaternary structure, homodimer. Mg(2+) is required as a cofactor.

The protein localises to the cytoplasm. It carries out the reaction Endonucleolytic cleavage to 5'-phosphomonoester.. Its function is as follows. Digests double-stranded RNA. Involved in the processing of primary rRNA transcript to yield the immediate precursors to the large and small rRNAs (23S and 16S). Processes some mRNAs, and tRNAs when they are encoded in the rRNA operon. Processes pre-crRNA and tracrRNA of type II CRISPR loci if present in the organism. This Variovorax paradoxus (strain S110) protein is Ribonuclease 3.